The primary structure comprises 140 residues: Nucleoside diphosphate kinase (140 aa).

The ATP site is built by K11, F59, R87, T93, R104, and N114. H117 functions as the Pros-phosphohistidine intermediate in the catalytic mechanism.

It belongs to the NDK family. Homotetramer. Mg(2+) is required as a cofactor.

It localises to the cytoplasm. It catalyses the reaction a 2'-deoxyribonucleoside 5'-diphosphate + ATP = a 2'-deoxyribonucleoside 5'-triphosphate + ADP. The catalysed reaction is a ribonucleoside 5'-diphosphate + ATP = a ribonucleoside 5'-triphosphate + ADP. Functionally, major role in the synthesis of nucleoside triphosphates other than ATP. The ATP gamma phosphate is transferred to the NDP beta phosphate via a ping-pong mechanism, using a phosphorylated active-site intermediate. The polypeptide is Nucleoside diphosphate kinase (Francisella tularensis subsp. tularensis (strain SCHU S4 / Schu 4)).